The following is a 69-amino-acid chain: DNA-directed RNA polymerase subunit epsilon (69 aa).

It belongs to the RNA polymerase subunit epsilon family. In terms of assembly, RNAP is composed of a core of 2 alpha, a beta and a beta' subunit. The core is associated with a delta subunit, and at least one of epsilon or omega. When a sigma factor is associated with the core the holoenzyme is formed, which can initiate transcription.

The catalysed reaction is RNA(n) + a ribonucleoside 5'-triphosphate = RNA(n+1) + diphosphate. A non-essential component of RNA polymerase (RNAP). The chain is DNA-directed RNA polymerase subunit epsilon from Listeria welshimeri serovar 6b (strain ATCC 35897 / DSM 20650 / CCUG 15529 / CIP 8149 / NCTC 11857 / SLCC 5334 / V8).